The chain runs to 1123 residues: Mediator of RNA polymerase II transcription subunit 14 (1123 aa).

Residues Lys-450–Gln-484 are disordered.

Belongs to the Mediator complex subunit 14 family. Component of the Mediator complex.

Its subcellular location is the nucleus. Component of the Mediator complex, a coactivator involved in the regulated transcription of nearly all RNA polymerase II-dependent genes. Mediator functions as a bridge to convey information from gene-specific regulatory proteins to the basal RNA polymerase II transcription machinery. Mediator is recruited to promoters by direct interactions with regulatory proteins and serves as a scaffold for the assembly of a functional preinitiation complex with RNA polymerase II and the general transcription factors. The protein is Mediator of RNA polymerase II transcription subunit 14 (RGR1) of Debaryomyces hansenii (strain ATCC 36239 / CBS 767 / BCRC 21394 / JCM 1990 / NBRC 0083 / IGC 2968) (Yeast).